We begin with the raw amino-acid sequence, 49 residues long: MARYRCCRSRSRSRCRPRRRRCRRRRRRCCRRRRRVCCRRYSARCRRRR.

It belongs to the protamine P1 family. As to expression, testis.

Its subcellular location is the nucleus. The protein localises to the chromosome. Its function is as follows. Protamines substitute for histones in the chromatin of sperm during the haploid phase of spermatogenesis. They compact sperm DNA into a highly condensed, stable and inactive complex. This Rhinopoma hardwickii (Lesser mouse-tailed bat) protein is Sperm protamine P1 (PRM1).